Here is a 330-residue protein sequence, read N- to C-terminus: Flotillin-like protein FloA (330 aa).

A run of 2 helical transmembrane segments spans residues Ile-3 to Met-23 and Leu-26 to Ala-46.

Belongs to the flotillin-like FloA family. Homooligomerizes.

The protein localises to the cell membrane. The protein resides in the membrane raft. Its function is as follows. Found in functional membrane microdomains (FMM) that may be equivalent to eukaryotic membrane rafts. FMMs are highly dynamic and increase in number as cells age. Flotillins are thought to be important factors in membrane fluidity. This chain is Flotillin-like protein FloA, found in Sorangium cellulosum (strain So ce56) (Polyangium cellulosum (strain So ce56)).